The sequence spans 420 residues: MVLSRGETKKNSVRLTAKQEKKPQSTFQTLKQSLKLSNNKKLKQDSTQHSNDTNKSVKAKKNGTSSKKTGTQRKRISTQRFSLFTYGNVQVMNSFVPIHNDIPNSSCIRRNSQVSANNVTESSGVFFNDTQSQDSQNTIKLKPTSLMAKGPIEIYQICTGFDKLKENIAPFQKSSKASSHDGHVVNYLSIGRHGDIVHPVLPKLQITRLNGAGFKYFISFYNPERYWEIEFLPLISQSQSELENSVKAFENVISKICQFSHINEGATIGNNESLSDKFKLPPTSDIEPPNTEIINNDDDDDDDDDNYDDDDLNYLLDEEYEQGCTDNSFSVISNTCSNLNASFLYPSDPTDAVSISINEAFKNAIRRTAPVLNIPIAAPSIHSKQQNKRYSSYPFIDSPPYLQDRHRRFQRRSISGLGDL.

Basic and acidic residues predominate over residues 1 to 10 (MVLSRGETKK). Disordered stretches follow at residues 1-75 (MVLS…QRKR) and 273-309 (SLSD…NYDD). Low complexity predominate over residues 30-39 (LKQSLKLSNN). Residues 45 to 56 (DSTQHSNDTNKS) show a composition bias toward polar residues. Phosphoserine is present on Ser-273. Residues 295-309 (NNDDDDDDDDDNYDD) show a composition bias toward acidic residues.

It belongs to the INP1 family.

It is found in the peroxisome membrane. Required for peroxisome inheritance. The sequence is that of Inheritance of peroxisomes protein 1 (INP1) from Saccharomyces cerevisiae (strain YJM789) (Baker's yeast).